Consider the following 483-residue polypeptide: Zinc metalloproteinase/disintegrin (483 aa).

A signal peptide spans 1–20; that stretch reads MIQVLLVTLCLAAFPYQGNS. Positions 21 to 191 are excised as a propeptide; that stretch reads IILESGNVND…KASQLNLTPE (171 aa). Positions 198–394 constitute a Peptidase M12B domain; it reads RYIELVVVAD…HNPQCMLNEP (197 aa). Residues Glu-201 and Asp-285 each coordinate Ca(2+). Disulfide bonds link Cys-309–Cys-389, Cys-349–Cys-373, and Cys-351–Cys-356. His-334 provides a ligand contact to Zn(2+). Glu-335 is a catalytic residue. Zn(2+) contacts are provided by His-338 and His-344. 2 residues coordinate Ca(2+): Cys-389 and Asn-392. Residues 395–414 constitute a propeptide that is removed on maturation; it reads LRTDIVSTPVSGNELWETGE. A Disintegrin domain is found at 402 to 483; it reads TPVSGNELWE…AGCPRNPFHA (82 aa). Disulfide bonds link Cys-425–Cys-448, Cys-439–Cys-445, Cys-444–Cys-469, and Cys-457–Cys-476. A Cell attachment site; atypical (KGD) motif is present at residues 461-463; sequence KGD.

This sequence belongs to the venom metalloproteinase (M12B) family. P-II subfamily. P-IIe sub-subfamily. Heterodimer with piscivostatin-alpha; disulfide-linked (disintegrin). The cofactor is Zn(2+). In terms of tissue distribution, expressed by the venom gland.

It localises to the secreted. Impairs hemostasis in the envenomed animal. Its function is as follows. Inhibits platelet aggregation induced by ADP. Acts by inhibiting fibrinogen interaction with platelet receptors GPIIb/GPIIIa (ITGA2B/ITGB3). Also inhibits platelet aggregate dissociation in human platelet-rich plasma. This is Zinc metalloproteinase/disintegrin from Agkistrodon piscivorus piscivorus (Eastern cottonmouth).